The sequence spans 204 residues: Protease (204 aa).

Active-site residues include His-53, Asp-70, and Cys-121.

Belongs to the peptidase C5 family. In terms of assembly, interacts with protease cofactor pVI-C; this interaction is necessary for protease activation.

It localises to the virion. It is found in the host nucleus. It carries out the reaction Cleaves proteins of the adenovirus and its host cell at two consensus sites: -Yaa-Xaa-Gly-Gly-|-Xaa- and -Yaa-Xaa-Gly-Xaa-|-Gly- (in which Yaa is Met, Ile or Leu, and Xaa is any amino acid).. With respect to regulation, requires DNA and protease cofactor for maximal activation. Inside nascent virions, becomes partially activated by binding to the viral DNA, allowing it to cleave the cofactor that binds to the protease and fully activates it. Actin, like the viral protease cofactor, seems to act as a cofactor in the cleavage of cytokeratin 18 and of actin itself. Cleaves viral precursor proteins (pTP, pIIIa, pVI, pVII, pVIII, and pX) inside newly assembled particles giving rise to mature virions. Protease complexed to its cofactor slides along the viral DNA to specifically locate and cleave the viral precursors. Mature virions have a weakened organization compared to the unmature virions, thereby facilitating subsequent uncoating. Without maturation, the particle lacks infectivity and is unable to uncoat. Late in adenovirus infection, in the cytoplasm, may participate in the cytoskeleton destruction. Cleaves host cell cytoskeletal keratins K7 and K18. In Porcine adenovirus A serotype 3 (PAdV-3), this protein is Protease.